A 94-amino-acid polypeptide reads, in one-letter code: Co-chaperonin GroES (94 aa).

This sequence belongs to the GroES chaperonin family. As to quaternary structure, heptamer of 7 subunits arranged in a ring. Interacts with the chaperonin GroEL.

The protein localises to the cytoplasm. Its function is as follows. Together with the chaperonin GroEL, plays an essential role in assisting protein folding. The GroEL-GroES system forms a nano-cage that allows encapsulation of the non-native substrate proteins and provides a physical environment optimized to promote and accelerate protein folding. GroES binds to the apical surface of the GroEL ring, thereby capping the opening of the GroEL channel. The polypeptide is Co-chaperonin GroES (Ligilactobacillus salivarius (strain UCC118) (Lactobacillus salivarius)).